The following is a 286-amino-acid chain: Oxidoreductase clz15 (286 aa).

It belongs to the asaB hydroxylase/desaturase family.

Its pathway is secondary metabolite biosynthesis. Functionally, oxidoreductase; part of the gene cluster that mediates the biosynthesis of squalestatin S1 (SQS1, also known as zaragozic acid A), a heavily oxidized fungal polyketide that offers potent cholesterol lowering activity by targeting squalene synthase (SS). SQS1 is composed of a 2,8-dioxobicyclic[3.2.1]octane-3,4,5-tricarboxyclic acid core that is connected to two lipophilic polyketide arms. These initial steps feature the priming of an unusual benzoic acid starter unit onto the highly reducing polyketide synthase clz14, followed by oxaloacetate extension and product release to generate a tricarboxylic acid containing product. The phenylalanine ammonia lyase (PAL) clz10 and the acyl-CoA ligase clz12 are involved in transforming phenylalanine into benzoyl-CoA. The citrate synthase-like protein clz17 is involved in connecting the C-alpha-carbons of the hexaketide chain and oxaloacetate to afford the tricarboxylic acid unit. The potential hydrolytic enzymes, clz11 and clz13, are in close proximity to pks2 and may participate in product release. On the other side, the tetraketide arm is synthesized by a the squalestatin tetraketide synthase clz2 and enzymatically esterified to the core in the last biosynthetic step, by the acetyltransferase clz6. The biosynthesis of the tetraketide must involve 3 rounds of chain extension. After the first and second rounds methyl-transfer occurs, and in all rounds of extension the ketoreductase and dehydratase are active. The enoyl reductase and C-MeT of clz2 are not active in the final round of extension. The acetyltransferase clz6 appears to have a broad substrate selectivity for its acyl CoA substrate, allowing the in vitro synthesis of novel squalestatins. The biosynthesis of SQS1 requires several oxidative steps likely performed by oxidoreductases clz3, clz15 and clz16. Finally, in support of the identification of the cluster as being responsible for SQS1 production, the cluster contains a gene encoding a putative squalene synthase (SS) clz20, suggesting a likely mechanism for self-resistance. The protein is Oxidoreductase clz15 of Cochliobolus lunatus (Filamentous fungus).